The primary structure comprises 852 residues: Bifunctional uridylyltransferase/uridylyl-removing enzyme (852 aa).

The segment at 1–318 (MPENLSSALE…STPMRVTLRI (318 aa)) is uridylyltransferase. Residues 319 to 672 (DDDYIQVNNQ…SRILPQSDSF (354 aa)) are uridylyl-removing. An HD domain is found at 436–558 (VDDHILAVVR…VQTHERLSAL (123 aa)). 2 ACT domains span residues 673–757 (QVMV…SCNR) and 785–852 (SVEI…EQLA).

It belongs to the GlnD family. The cofactor is Mg(2+).

It catalyses the reaction [protein-PII]-L-tyrosine + UTP = [protein-PII]-uridylyl-L-tyrosine + diphosphate. The enzyme catalyses [protein-PII]-uridylyl-L-tyrosine + H2O = [protein-PII]-L-tyrosine + UMP + H(+). With respect to regulation, uridylyltransferase (UTase) activity is inhibited by glutamine, while glutamine activates uridylyl-removing (UR) activity. Modifies, by uridylylation and deuridylylation, the PII regulatory proteins (GlnB and homologs), in response to the nitrogen status of the cell that GlnD senses through the glutamine level. Under low glutamine levels, catalyzes the conversion of the PII proteins and UTP to PII-UMP and PPi, while under higher glutamine levels, GlnD hydrolyzes PII-UMP to PII and UMP (deuridylylation). Thus, controls uridylylation state and activity of the PII proteins, and plays an important role in the regulation of nitrogen assimilation and metabolism. This chain is Bifunctional uridylyltransferase/uridylyl-removing enzyme, found in Neisseria gonorrhoeae (strain NCCP11945).